Here is a 1332-residue protein sequence, read N- to C-terminus: Elongator complex protein 1 (1332 aa).

A phosphoserine mark is found at Ser471, Ser804, Ser867, Ser1171, and Ser1174. The tract at residues 885-1332 (VDVNELYDHS…RTQWKLSLLD (448 aa)) is mediates dimerization. The disordered stretch occupies residues 1150–1208 (QAGLDDEVPHGQESDLFSETSSVVSGSEMSGKYSHSNSRISARSSKNRRKAERKKHSLK). Positions 1164–1177 (DLFSETSSVVSGSE) are enriched in polar residues. Residues 1191–1209 (ARSSKNRRKAERKKHSLKE) are required for binding to tRNA. The span at 1194 to 1206 (SKNRRKAERKKHS) shows a compositional bias: basic residues.

This sequence belongs to the ELP1/IKA1 family. In terms of assembly, homodimer; dimerization promotes ELP1 stability and elongator complex formation. Component of the elongator complex which consists of ELP1, ELP2, ELP3, ELP4, ELP5 and ELP6. Interacts preferentially with MAP3K14/NIK followed by IKK-alpha and IKK-beta.

The protein localises to the cytoplasm. It localises to the nucleus. It participates in tRNA modification; 5-methoxycarbonylmethyl-2-thiouridine-tRNA biosynthesis. Its function is as follows. Component of the elongator complex which is required for multiple tRNA modifications, including mcm5U (5-methoxycarbonylmethyl uridine), mcm5s2U (5-methoxycarbonylmethyl-2-thiouridine), and ncm5U (5-carbamoylmethyl uridine). The elongator complex catalyzes the formation of carboxymethyluridine in the wobble base at position 34 in tRNAs. Regulates the migration and branching of projection neurons in the developing cerebral cortex, through a process depending on alpha-tubulin acetylation. ELP1 binds to tRNA, mediating interaction of the elongator complex with tRNA. May act as a scaffold protein that assembles active IKK-MAP3K14 complexes (IKKA, IKKB and MAP3K14/NIK). This chain is Elongator complex protein 1, found in Homo sapiens (Human).